A 181-amino-acid chain; its full sequence is Peptidyl-prolyl cis-trans isomerase H (181 aa).

Residues 17-180 form the PPIase cyclophilin-type domain; the sequence is FFDITLGGES…QDVTIIQCGE (164 aa).

Belongs to the cyclophilin-type PPIase family. PPIase H subfamily.

It localises to the nucleus. It carries out the reaction [protein]-peptidylproline (omega=180) = [protein]-peptidylproline (omega=0). PPIases accelerate the folding of proteins. It catalyzes the cis-trans isomerization of proline imidic peptide bonds in oligopeptides. This chain is Peptidyl-prolyl cis-trans isomerase H (cyp3), found in Aspergillus oryzae (strain ATCC 42149 / RIB 40) (Yellow koji mold).